The chain runs to 124 residues: Small ribosomal subunit protein bS6 (124 aa).

The segment at 101–124 (IMMKEVQREEARKSAQSDAPAVAA) is disordered. The segment covering 105–115 (EVQREEARKSA) has biased composition (basic and acidic residues).

It belongs to the bacterial ribosomal protein bS6 family.

In terms of biological role, binds together with bS18 to 16S ribosomal RNA. This Polynucleobacter asymbioticus (strain DSM 18221 / CIP 109841 / QLW-P1DMWA-1) (Polynucleobacter necessarius subsp. asymbioticus) protein is Small ribosomal subunit protein bS6.